Here is a 319-residue protein sequence, read N- to C-terminus: ATP-dependent 6-phosphofructokinase (319 aa).

Gly11 lines the ATP pocket. 21–25 (RAVVR) provides a ligand contact to ADP. ATP-binding positions include 72–73 (RY) and 102–105 (GDGS). Residue Asp103 coordinates Mg(2+). 125 to 127 (TID) provides a ligand contact to substrate. The active-site Proton acceptor is the Asp127. Residue Arg154 participates in ADP binding. Residues Arg162 and 169-171 (MGR) contribute to the substrate site. ADP contacts are provided by residues 185–187 (GAE), Arg211, and 213–215 (KKH). Residues Glu222, Arg243, and 249–252 (HVQR) each bind substrate.

Belongs to the phosphofructokinase type A (PFKA) family. ATP-dependent PFK group I subfamily. Prokaryotic clade 'B1' sub-subfamily. As to quaternary structure, homotetramer. Requires Mg(2+) as cofactor.

It is found in the cytoplasm. It carries out the reaction beta-D-fructose 6-phosphate + ATP = beta-D-fructose 1,6-bisphosphate + ADP + H(+). It participates in carbohydrate degradation; glycolysis; D-glyceraldehyde 3-phosphate and glycerone phosphate from D-glucose: step 3/4. Its activity is regulated as follows. Allosterically activated by ADP and other diphosphonucleosides, and allosterically inhibited by phosphoenolpyruvate. Catalyzes the phosphorylation of D-fructose 6-phosphate to fructose 1,6-bisphosphate by ATP, the first committing step of glycolysis. The polypeptide is ATP-dependent 6-phosphofructokinase (Listeria monocytogenes serotype 4b (strain CLIP80459)).